Consider the following 358-residue polypeptide: Peptide chain release factor 1 (358 aa).

Residue Q233 is modified to N5-methylglutamine.

The protein belongs to the prokaryotic/mitochondrial release factor family. Methylated by PrmC. Methylation increases the termination efficiency of RF1.

It localises to the cytoplasm. In terms of biological role, peptide chain release factor 1 directs the termination of translation in response to the peptide chain termination codons UAG and UAA. In Staphylococcus aureus (strain MRSA252), this protein is Peptide chain release factor 1.